The sequence spans 121 residues: UPF0738 protein BLi01253/BL05110 (121 aa).

Belongs to the UPF0738 family.

In Bacillus licheniformis (strain ATCC 14580 / DSM 13 / JCM 2505 / CCUG 7422 / NBRC 12200 / NCIMB 9375 / NCTC 10341 / NRRL NRS-1264 / Gibson 46), this protein is UPF0738 protein BLi01253/BL05110.